A 1274-amino-acid polypeptide reads, in one-letter code: MARQPEEEETAVARARRPPLWLLCLVACWLLGAGAEADFSILDEAQVLASQMRRLAAEELGVVTMQRIFNSFVYTEKISNGESEVQQLAKKIREKFNRYLDVVNRNKQVVEASYTAHLTSPLTAIQDCCTIPPSMMEFDGNFNTNVSRTISCDRLSTTVNSRAFNPGRDLNSVLADNLKSNPGIKWQYFSSEEGIFTVFPAHKFRCKGSYEHRSRPIYVSTVRPQSKHIVVILDHGASVTDTQLQIAKDAAQVILSAIDEHDKISVLTVADTVRTCSLDQCYKTFLSPATSETKRKMSTFVSSVKSSDSPTQHAVGFQKAFQLIRSTNNNTKFQANTDMVIIYLSAGITSKDSSEEDKKATLQVINEENSFLNNSVMILTYALMNDGVTGLKELAFLRDLAEQNSGKYGVPDRMALPVIKGSMMVLNQLSNLETTVGRFYTNLPNRMIDEAVFSLPFSDEMGDGLIMTVSKPCYFGNLLLGIVGVDVNLAYILEDVTYYQDSLASYTFLIDDKGYTLMHPSLTRPYLLSEPPLHTDIIHYENIPKFELVRQNILSLPLGSQIIAVPVNSSLSWHINKLRETGKEAYNVSYAWKMVQDTSFILCIVVIQPEIPVKQLKNLNTVPSSKLLYHRLDLLGQPSACLHFKQLATLESPTIMLSAGSFSSPYEHLSQPETKRMVEHYTAYLSDNTRLIANPGLKFSVRNEVMATSHVTDEWMTQMEMSSLNTYIVRRYIATPNGVLRIYPGSLMDKAFDPTRRQWYLHAVANPGLISLTGPYLDVGGAGYVVTISHTIHSSSTQLSSGHTVAVMGIDFTLRYFYKVLMDLLPVCNQDGGNKIRCFIMEDRGYLVAHPTLIDPKGHAPVEQQHITHKEPLVANDILNHPNFVKKNLCNSFSDRTVQRFYKFNTSLAGDLTNLVHGSHCSKYRLARIPGTNAFVGIVNETCDSLAFCACSMVDRLCLNCHRMEQNECECPCECPLEVNECTGNLTNAENRNPSCEVHQEPVTYTAIDPGLQDALHQCVNSRCSQRLESGDCFGVLDCEWCMVDSDGKTHLDKPYCAPQKECFGGIVGAKSPYVDDMGAIGDEVITLNMIKSAPVGPVAGGIMGCIMVLVLAVYAYRHQIHRRSHQHMSPLAAQEMSVRMSNLENDRDERDDDSHEDRGIISNTRFIAAVIERHAHSPERRRRYWGRSGTESDHGYSTMSPQEDSENPPCNNDPLSAGVDVGNHDEDLDLDTPPQTAALLSHKFHHYRSHHPTLHHSHHLQAAVTVHTVDAEC.

Residues 1-35 (MARQPEEEETAVARARRPPLWLLCLVACWLLGAGA) form the signal peptide. Over 36-1095 (EADFSILDEA…ITLNMIKSAP (1060 aa)) the chain is Extracellular. Asparagine 145 carries N-linked (GlcNAc...) asparagine glycosylation. The VWFA domain maps to 228–443 (HIVVILDHGA…TTVGRFYTNL (216 aa)). Cache domains follow at residues 453–532 (FSLP…SEPP) and 772–853 (LTGP…HPTL). The chain crosses the membrane as a helical span at residues 1096–1116 (VGPVAGGIMGCIMVLVLAVYA). Residues 1117-1274 (YRHQIHRRSH…VTVHTVDAEC (158 aa)) lie on the Cytoplasmic side of the membrane. The interval 1179 to 1227 (PERRRRYWGRSGTESDHGYSTMSPQEDSENPPCNNDPLSAGVDVGNHDE) is disordered. Residues 1196–1215 (GYSTMSPQEDSENPPCNNDP) show a composition bias toward polar residues.

This sequence belongs to the calcium channel subunit alpha-2/delta family.

It localises to the membrane. Its function is as follows. May regulate voltage-dependent calcium channels. This chain is VWFA and cache domain-containing protein 1 (CACHD1), found in Homo sapiens (Human).